A 587-amino-acid chain; its full sequence is GATA zinc finger domain-containing protein 3 (587 aa).

Over residues 53-74 the composition is skewed to low complexity; the sequence is NINNNINNNNNNNNNNNNNNIN. 3 disordered regions span residues 53–141, 179–294, and 312–392; these read NINN…LKIP, QLAH…SSPS, and QTSP…ATIN. Positions 75–86 are enriched in polar residues; it reads QYHQNHYDQYSD. Composition is skewed to low complexity over residues 87–136, 183–202, 237–264, 272–292, and 316–333; these read NNCN…NNNN, NSSM…TPTS, NING…INNG, GNNN…NSSS, and SQQS…QQSQ. Composition is skewed to polar residues over residues 340–358 and 365–379; these read INTT…TNSP and NESS…TPLS. Residues 500-525 form a GATA-type zinc finger; the sequence is CIFCGTMETPEWRKGPGGHKTLCNAC. Residues 536–587 form a disordered region; sequence ENQNNGGSPNPQQNNVTTTTTTTTSTSTNSPNSNGNNFSPESAMSVSKLISD. Residues 538–575 show a composition bias toward low complexity; sequence QNNGGSPNPQQNNVTTTTTTTTSTSTNSPNSNGNNFSP. Polar residues predominate over residues 577–587; sequence SAMSVSKLISD.

In Dictyostelium discoideum (Social amoeba), this protein is GATA zinc finger domain-containing protein 3 (gtaC).